The chain runs to 203 residues: Thymidylate kinase (203 aa).

9-16 (GPEGSGKT) is a binding site for ATP.

The protein belongs to the thymidylate kinase family.

The catalysed reaction is dTMP + ATP = dTDP + ADP. Functionally, phosphorylation of dTMP to form dTDP in both de novo and salvage pathways of dTTP synthesis. The polypeptide is Thymidylate kinase (Staphylococcus haemolyticus (strain JCSC1435)).